Here is a 71-residue protein sequence, read N- to C-terminus: Defensin-like protein 292 (71 aa).

Intrachain disulfides connect Cys-44/Cys-64, Cys-50/Cys-69, and Cys-56/Cys-71.

Belongs to the DEFL family.

The protein is Defensin-like protein 292 of Arabidopsis thaliana (Mouse-ear cress).